Consider the following 87-residue polypeptide: Large ribosomal subunit protein bL27 (87 aa).

Residues 1-20 (MAHKKAGGSSRNGRDSESKR) form a disordered region.

The protein belongs to the bacterial ribosomal protein bL27 family.

The chain is Large ribosomal subunit protein bL27 from Thiobacillus denitrificans (strain ATCC 25259 / T1).